The following is a 357-amino-acid chain: Neutral protease 2 homolog UREG_02006 (357 aa).

The N-terminal stretch at 1–19 is a signal peptide; the sequence is MLFSSRFLALAALLGQALA. The propeptide occupies 20–179; it reads LPIDDFSQSD…QSAVPTIEKR (160 aa). 2 disulfide bridges follow: Cys187–Cys259 and Cys266–Cys284. Zn(2+) is bound at residue His308. The active site involves Glu309. Residues His312 and Asp323 each contribute to the Zn(2+) site.

This sequence belongs to the peptidase M35 family. It depends on Zn(2+) as a cofactor.

The protein resides in the secreted. It carries out the reaction Preferential cleavage of bonds with hydrophobic residues in P1'. Also 3-Asn-|-Gln-4 and 8-Gly-|-Ser-9 bonds in insulin B chain.. In terms of biological role, secreted metalloproteinase that allows assimilation of proteinaceous substrates. Shows high activities on basic nuclear substrates such as histone and protamine. The protein is Neutral protease 2 homolog UREG_02006 of Uncinocarpus reesii (strain UAMH 1704).